The primary structure comprises 197 residues: ATP-dependent Clp protease proteolytic subunit (197 aa).

Residue Ser-98 is the Nucleophile of the active site. His-123 is an active-site residue.

It belongs to the peptidase S14 family. In terms of assembly, fourteen ClpP subunits assemble into 2 heptameric rings which stack back to back to give a disk-like structure with a central cavity, resembling the structure of eukaryotic proteasomes.

The protein localises to the cytoplasm. The catalysed reaction is Hydrolysis of proteins to small peptides in the presence of ATP and magnesium. alpha-casein is the usual test substrate. In the absence of ATP, only oligopeptides shorter than five residues are hydrolyzed (such as succinyl-Leu-Tyr-|-NHMec, and Leu-Tyr-Leu-|-Tyr-Trp, in which cleavage of the -Tyr-|-Leu- and -Tyr-|-Trp bonds also occurs).. Cleaves peptides in various proteins in a process that requires ATP hydrolysis. Has a chymotrypsin-like activity. Plays a major role in the degradation of misfolded proteins. The protein is ATP-dependent Clp protease proteolytic subunit of Limosilactobacillus reuteri (strain DSM 20016) (Lactobacillus reuteri).